We begin with the raw amino-acid sequence, 253 residues long: Tryptophan synthase alpha chain (253 aa).

Residues Glu-47 and Asp-58 each act as proton acceptor in the active site.

This sequence belongs to the TrpA family. Tetramer of two alpha and two beta chains.

It carries out the reaction (1S,2R)-1-C-(indol-3-yl)glycerol 3-phosphate + L-serine = D-glyceraldehyde 3-phosphate + L-tryptophan + H2O. Its pathway is amino-acid biosynthesis; L-tryptophan biosynthesis; L-tryptophan from chorismate: step 5/5. Its function is as follows. The alpha subunit is responsible for the aldol cleavage of indoleglycerol phosphate to indole and glyceraldehyde 3-phosphate. The polypeptide is Tryptophan synthase alpha chain (Syntrophotalea carbinolica (strain DSM 2380 / NBRC 103641 / GraBd1) (Pelobacter carbinolicus)).